Here is a 353-residue protein sequence, read N- to C-terminus: DNA-directed RNA polymerase subunit alpha (353 aa).

Residues 1 to 234 (MVREKVTVST…DLFIPFLHTE (234 aa)) form an alpha N-terminal domain (alpha-NTD) region. The interval 267–353 (KRALKSIFID…LAQLIDSKSG (87 aa)) is alpha C-terminal domain (alpha-CTD).

Belongs to the RNA polymerase alpha chain family. In plastids the minimal PEP RNA polymerase catalytic core is composed of four subunits: alpha, beta, beta', and beta''. When a (nuclear-encoded) sigma factor is associated with the core the holoenzyme is formed, which can initiate transcription.

It localises to the plastid. Its subcellular location is the chloroplast. It catalyses the reaction RNA(n) + a ribonucleoside 5'-triphosphate = RNA(n+1) + diphosphate. Functionally, DNA-dependent RNA polymerase catalyzes the transcription of DNA into RNA using the four ribonucleoside triphosphates as substrates. This Daucus carota (Wild carrot) protein is DNA-directed RNA polymerase subunit alpha.